The sequence spans 149 residues: D-aminoacyl-tRNA deacylase (149 aa).

The Gly-cisPro motif, important for rejection of L-amino acids signature appears at 137-138 (GP).

This sequence belongs to the DTD family. As to quaternary structure, homodimer.

Its subcellular location is the cytoplasm. The catalysed reaction is glycyl-tRNA(Ala) + H2O = tRNA(Ala) + glycine + H(+). It carries out the reaction a D-aminoacyl-tRNA + H2O = a tRNA + a D-alpha-amino acid + H(+). An aminoacyl-tRNA editing enzyme that deacylates mischarged D-aminoacyl-tRNAs. Also deacylates mischarged glycyl-tRNA(Ala), protecting cells against glycine mischarging by AlaRS. Acts via tRNA-based rather than protein-based catalysis; rejects L-amino acids rather than detecting D-amino acids in the active site. By recycling D-aminoacyl-tRNA to D-amino acids and free tRNA molecules, this enzyme counteracts the toxicity associated with the formation of D-aminoacyl-tRNA entities in vivo and helps enforce protein L-homochirality. The sequence is that of D-aminoacyl-tRNA deacylase from Clostridium perfringens (strain ATCC 13124 / DSM 756 / JCM 1290 / NCIMB 6125 / NCTC 8237 / Type A).